Reading from the N-terminus, the 407-residue chain is Bifunctional enzyme IspD/IspF (407 aa).

Positions 1–246 are 2-C-methyl-D-erythritol 4-phosphate cytidylyltransferase; it reads MTEASENASA…SSERTHFPDI (246 aa). The 2-C-methyl-D-erythritol 2,4-cyclodiphosphate synthase stretch occupies residues 247 to 407; that stretch reads RTGNGYDVHA…SVVFPGEVPE (161 aa). Positions 253 and 255 each coordinate a divalent metal cation. 4-CDP-2-C-methyl-D-erythritol 2-phosphate is bound by residues 253–255 and 279–280; these read DVH and HS. Histidine 287 contributes to the a divalent metal cation binding site. Residues 301–303, 377–380, phenylalanine 384, and arginine 387 each bind 4-CDP-2-C-methyl-D-erythritol 2-phosphate; these read DIG and TTNE.

The protein in the N-terminal section; belongs to the IspD/TarI cytidylyltransferase family. IspD subfamily. This sequence in the C-terminal section; belongs to the IspF family. Requires a divalent metal cation as cofactor.

The catalysed reaction is 2-C-methyl-D-erythritol 4-phosphate + CTP + H(+) = 4-CDP-2-C-methyl-D-erythritol + diphosphate. It catalyses the reaction 4-CDP-2-C-methyl-D-erythritol 2-phosphate = 2-C-methyl-D-erythritol 2,4-cyclic diphosphate + CMP. It functions in the pathway isoprenoid biosynthesis; isopentenyl diphosphate biosynthesis via DXP pathway; isopentenyl diphosphate from 1-deoxy-D-xylulose 5-phosphate: step 2/6. It participates in isoprenoid biosynthesis; isopentenyl diphosphate biosynthesis via DXP pathway; isopentenyl diphosphate from 1-deoxy-D-xylulose 5-phosphate: step 4/6. Functionally, bifunctional enzyme that catalyzes the formation of 4-diphosphocytidyl-2-C-methyl-D-erythritol from CTP and 2-C-methyl-D-erythritol 4-phosphate (MEP) (IspD), and catalyzes the conversion of 4-diphosphocytidyl-2-C-methyl-D-erythritol 2-phosphate (CDP-ME2P) to 2-C-methyl-D-erythritol 2,4-cyclodiphosphate (ME-CPP) with a corresponding release of cytidine 5-monophosphate (CMP) (IspF). The sequence is that of Bifunctional enzyme IspD/IspF from Mesorhizobium japonicum (strain LMG 29417 / CECT 9101 / MAFF 303099) (Mesorhizobium loti (strain MAFF 303099)).